A 311-amino-acid chain; its full sequence is Meiotically up-regulated gene 146 protein (311 aa).

It localises to the cytoplasm. Its subcellular location is the nucleus. Its function is as follows. Has a role in sporulation. The protein is Meiotically up-regulated gene 146 protein (mug146) of Schizosaccharomyces pombe (strain 972 / ATCC 24843) (Fission yeast).